We begin with the raw amino-acid sequence, 185 residues long: Ribosome-recycling factor (185 aa).

It belongs to the RRF family.

The protein localises to the cytoplasm. In terms of biological role, responsible for the release of ribosomes from messenger RNA at the termination of protein biosynthesis. May increase the efficiency of translation by recycling ribosomes from one round of translation to another. This Francisella tularensis subsp. tularensis (strain FSC 198) protein is Ribosome-recycling factor.